The primary structure comprises 435 residues: Cytokine-dependent hematopoietic cell linker (435 aa).

Phosphotyrosine; by LYN occurs at positions 69 and 96. The tract at residues 155-303 (KINKTPLPPP…PDPTKPDEKD (149 aa)) is disordered. Residues 160–165 (PLPPPR) form a mediates interaction with PLCG1; essential for BCR signaling; involved in restoration of BCR-induced calcium response and ERK2 and JNK2 activation in BLNK-deficient cells expressing LAT region. Residues 178–182 (PPAPP) form a mediates interaction with LAT, GRB2, and FGR; involved in translocation to the glycolipid-enriched microdomain and restoration of BCR-induced calcium response in BLNK-deficient DT40 cells expressing LAT region. Residues 226–249 (PESSCPSSNQNTQKSPPAIASSSY) are compositionally biased toward polar residues. The segment covering 290–303 (NSEKPDPTKPDEKD) has biased composition (basic and acidic residues). The region spanning 309–418 (WYIGEYSRQA…RKQCYLTQPL (110 aa)) is the SH2 domain.

When phosphorylated, interacts with PLCG1, PLCG2, GRB2, VAV and LAT. Associated with a tyrosine-phosphorylated polypeptide (p92) in response to immunoreceptor stimulation. Interacts with LBR and AGO2. Interacts with FGR. Part of a complex consisting of CLNK, SKAP1 and FYB1. Interacts (via SH2 domain) with FYB1; this interaction allows SKAP1 and FYB1 to promote tyrosine phosphorylation of CLNK by LYN. Interacts (via SH2 domain) with MAP4K1. Post-translationally, tyrosine-phosphorylated upon BCR cross-linking. Tyrosine phosphorylation at both Tyr-69 and Tyr-96 are required for BCR-induced calcium response and are essential to restore PLCG2-mediated signaling in BLNK-deficient DT40 cells, but this phosphorylation is dispensable in cells expressing LAT. Interacts with the SH2 domain of PLCG1 via phosphorylated Tyr-96. Tyrosine phosphorylation is increased when complexed with SKAP1 and FYB1. Expressed in T-cells, mast cells, natural killer and natural killer T cells (at protein level). Expressed in cytokine-stimulated hemopoietic cells.

Its subcellular location is the cytoplasm. In terms of biological role, an adapter protein which plays a role in the regulation of immunoreceptor signaling, including PLC-gamma-mediated B-cell antigen receptor (BCR) signaling and FC-epsilon R1-mediated mast cell degranulation. Together with FGR, it acts as a negative regulator of natural killer cell-activating receptors and inhibits interferon-gamma production. Acts as a positive regulator of both T-cell receptor and natural killer T (NKT) cell receptor signaling in CD4-positive NKT cells. Together with MAP4K1, it enhances CD3-triggered activation of T-cells and subsequent IL2 production. May be involved in tumor necrosis factor induced cell death by promoting reactive oxidative species generation, and MLKL oligomerization, ultimately leading to necrosis. Involved in phosphorylation of LAT. May be involved in high affinity immunoglobulin epsilon receptor signaling in mast cells. This chain is Cytokine-dependent hematopoietic cell linker (Clnk), found in Mus musculus (Mouse).